The following is a 651-amino-acid chain: NADH oxidase (651 aa).

Gln-104 contacts FMN. Catalysis depends on Tyr-175, which acts as the Proton donor. FMN contacts are provided by residues Arg-223 and 320–321 (GR). [4Fe-4S] cluster is bound by residues Cys-344, Cys-347, Cys-351, and Cys-364. 5 residues coordinate FAD: Ala-396, Glu-415, Gln-423, Lys-433, and Ala-460.

It in the N-terminal section; belongs to the NADH:flavin oxidoreductase/NADH oxidase family. As to quaternary structure, homohexamer. Requires FMN as cofactor. The cofactor is FAD. It depends on [4Fe-4S] cluster as a cofactor. In terms of processing, the N-terminus is blocked.

It catalyses the reaction A + NADH + H(+) = AH2 + NAD(+). Reduces a range of alternative electron acceptors. This Thermoanaerobacter brockii (Thermoanaerobium brockii) protein is NADH oxidase.